The primary structure comprises 612 residues: Dihydroxy-acid dehydratase (612 aa).

Asp81 serves as a coordination point for Mg(2+). Cys122 serves as a coordination point for [2Fe-2S] cluster. Mg(2+) contacts are provided by Asp123 and Lys124. The residue at position 124 (Lys124) is an N6-carboxylysine. Cys195 provides a ligand contact to [2Fe-2S] cluster. Mg(2+) is bound at residue Glu491. The active-site Proton acceptor is Ser517.

It belongs to the IlvD/Edd family. As to quaternary structure, homodimer. It depends on [2Fe-2S] cluster as a cofactor. Mg(2+) is required as a cofactor.

The enzyme catalyses (2R)-2,3-dihydroxy-3-methylbutanoate = 3-methyl-2-oxobutanoate + H2O. It catalyses the reaction (2R,3R)-2,3-dihydroxy-3-methylpentanoate = (S)-3-methyl-2-oxopentanoate + H2O. It functions in the pathway amino-acid biosynthesis; L-isoleucine biosynthesis; L-isoleucine from 2-oxobutanoate: step 3/4. Its pathway is amino-acid biosynthesis; L-valine biosynthesis; L-valine from pyruvate: step 3/4. In terms of biological role, functions in the biosynthesis of branched-chain amino acids. Catalyzes the dehydration of (2R,3R)-2,3-dihydroxy-3-methylpentanoate (2,3-dihydroxy-3-methylvalerate) into 2-oxo-3-methylpentanoate (2-oxo-3-methylvalerate) and of (2R)-2,3-dihydroxy-3-methylbutanoate (2,3-dihydroxyisovalerate) into 2-oxo-3-methylbutanoate (2-oxoisovalerate), the penultimate precursor to L-isoleucine and L-valine, respectively. The sequence is that of Dihydroxy-acid dehydratase from Buchnera aphidicola subsp. Baizongia pistaciae (strain Bp).